We begin with the raw amino-acid sequence, 401 residues long: Deubiquitinase and deneddylase Dub1 (401 aa).

Residues 1 to 11 (MLSPTNSTSKT) show a composition bias toward polar residues. Residues 1-24 (MLSPTNSTSKTAPVPPRDSSKPVL) are disordered. A helical membrane pass occupies residues 40–60 (TALAVLLVVVTLGLILLFYSF). The tract at residues 77–130 (KEQPTISIPVPLPSPPLAVPRPSTPPPPVISRPSTPSAPKPSTPPPLLPKAPKP) is disordered. A compositionally biased stretch (pro residues) spans 86-128 (VPLPSPPLAVPRPSTPPPPVISRPSTPSAPKPSTPPPLLPKAP). Active-site residues include His-275, Asp-292, and Cys-345.

Belongs to the peptidase C48 family. Binds to host NFKBIA.

It is found in the secreted. Its subcellular location is the host cell. The protein resides in the membrane. Functionally, effector proteins function to alter host cell physiology and promote bacterial survival in host tissues. This protease possesses deubiquitinating and deneddylating activities. Impairs ubiquitination and degradation of NF-kappa-B inhibitor alpha (NFKBIA), thereby preventing NF-kappa-B activation. The chain is Deubiquitinase and deneddylase Dub1 (cdu1) from Chlamydia trachomatis serovar L2 (strain ATCC VR-902B / DSM 19102 / 434/Bu).